The following is a 174-amino-acid chain: Shikimate kinase 2 (174 aa).

12–17 (GCGKTT) is a binding site for ATP. Mg(2+)-binding residues include Thr16 and Asp32. 3 residues coordinate substrate: Asp34, Arg58, and Gly79. An LID domain region spans residues 112-126 (EAFPEEGQRPTLTGK). Arg120 is an ATP binding site. Position 139 (Arg139) interacts with substrate. Gln155 is an ATP binding site.

The protein belongs to the shikimate kinase family. AroL subfamily. In terms of assembly, monomer. Mg(2+) is required as a cofactor.

It is found in the cytoplasm. The catalysed reaction is shikimate + ATP = 3-phosphoshikimate + ADP + H(+). It participates in metabolic intermediate biosynthesis; chorismate biosynthesis; chorismate from D-erythrose 4-phosphate and phosphoenolpyruvate: step 5/7. Functionally, catalyzes the specific phosphorylation of the 3-hydroxyl group of shikimic acid using ATP as a cosubstrate. The chain is Shikimate kinase 2 from Enterobacter sp. (strain 638).